Consider the following 183-residue polypeptide: Gamma-crystallin N-B (183 aa).

Beta/gamma crystallin 'Greek key' domains lie at 6 to 46, 47 to 89, 95 to 136, and 138 to 180; these read GKIC…RVES, GAWI…RPIR, YRME…RVFG, and GAWV…RRIV.

The protein belongs to the beta/gamma-crystallin family. In terms of assembly, monomer.

Functionally, crystallins are the dominant structural components of the vertebrate eye lens. This chain is Gamma-crystallin N-B (crygnb), found in Danio rerio (Zebrafish).